Reading from the N-terminus, the 364-residue chain is Putative methylthioribose-1-phosphate isomerase (364 aa).

Substrate contacts are provided by residues 57–59 (RGA), R100, and Q206. D247 serves as the catalytic Proton donor. 257–258 (NK) contributes to the substrate binding site.

It belongs to the eIF-2B alpha/beta/delta subunits family. MtnA subfamily.

It carries out the reaction 5-(methylsulfanyl)-alpha-D-ribose 1-phosphate = 5-(methylsulfanyl)-D-ribulose 1-phosphate. In terms of biological role, catalyzes the interconversion of methylthioribose-1-phosphate (MTR-1-P) into methylthioribulose-1-phosphate (MTRu-1-P). This is Putative methylthioribose-1-phosphate isomerase from Pyrococcus horikoshii (strain ATCC 700860 / DSM 12428 / JCM 9974 / NBRC 100139 / OT-3).